Reading from the N-terminus, the 312-residue chain is Ribosomal protein L11 methyltransferase (312 aa).

Residues T163, G184, D206, and N248 each coordinate S-adenosyl-L-methionine.

It belongs to the methyltransferase superfamily. PrmA family.

It is found in the cytoplasm. It carries out the reaction L-lysyl-[protein] + 3 S-adenosyl-L-methionine = N(6),N(6),N(6)-trimethyl-L-lysyl-[protein] + 3 S-adenosyl-L-homocysteine + 3 H(+). In terms of biological role, methylates ribosomal protein L11. The polypeptide is Ribosomal protein L11 methyltransferase (Clostridium kluyveri (strain NBRC 12016)).